Here is a 128-residue protein sequence, read N- to C-terminus: Ribosome-binding factor A (128 aa).

Belongs to the RbfA family. Monomer. Binds 30S ribosomal subunits, but not 50S ribosomal subunits or 70S ribosomes.

It is found in the cytoplasm. In terms of biological role, one of several proteins that assist in the late maturation steps of the functional core of the 30S ribosomal subunit. Associates with free 30S ribosomal subunits (but not with 30S subunits that are part of 70S ribosomes or polysomes). Required for efficient processing of 16S rRNA. May interact with the 5'-terminal helix region of 16S rRNA. The chain is Ribosome-binding factor A from Saccharophagus degradans (strain 2-40 / ATCC 43961 / DSM 17024).